A 188-amino-acid polypeptide reads, in one-letter code: Elongation factor P (188 aa).

Belongs to the elongation factor P family.

The protein resides in the cytoplasm. Its pathway is protein biosynthesis; polypeptide chain elongation. In terms of biological role, involved in peptide bond synthesis. Stimulates efficient translation and peptide-bond synthesis on native or reconstituted 70S ribosomes in vitro. Probably functions indirectly by altering the affinity of the ribosome for aminoacyl-tRNA, thus increasing their reactivity as acceptors for peptidyl transferase. The protein is Elongation factor P of Sulfurovum sp. (strain NBC37-1).